Here is a 311-residue protein sequence, read N- to C-terminus: Porphobilinogen deaminase (311 aa).

C242 bears the S-(dipyrrolylmethanemethyl)cysteine mark.

It belongs to the HMBS family. As to quaternary structure, monomer. Dipyrromethane serves as cofactor.

It carries out the reaction 4 porphobilinogen + H2O = hydroxymethylbilane + 4 NH4(+). Its pathway is porphyrin-containing compound metabolism; protoporphyrin-IX biosynthesis; coproporphyrinogen-III from 5-aminolevulinate: step 2/4. In terms of biological role, tetrapolymerization of the monopyrrole PBG into the hydroxymethylbilane pre-uroporphyrinogen in several discrete steps. The polypeptide is Porphobilinogen deaminase (hemC) (Neisseria meningitidis serogroup B (strain ATCC BAA-335 / MC58)).